Here is an 838-residue protein sequence, read N- to C-terminus: Collagen alpha-2(I) chain (838 aa).

The disordered stretch occupies residues 1–838 (GPMGIMGPRG…GTVGPAGIRS (838 aa)). The span at 11–38 (FQGPAGEPGEPGQTGPAGARGPAGPPGK) shows a compositional bias: low complexity. Residues 39 to 53 (AGEDGHPGKPGRPGE) show a composition bias toward basic and acidic residues. Composition is skewed to low complexity over residues 101 to 122 (SRGS…SAGP), 137 to 147 (PVGNTGPAGPA), 215 to 236 (NGES…RGIP), and 329 to 344 (AGNR…NGAQ). The segment covering 351–360 (GVQGGKGEQG) has biased composition (gly residues). Composition is skewed to low complexity over residues 407–424 (PGES…SRGP) and 436–446 (EPGVVGAPGTA). Gly residues predominate over residues 447–456 (GPAGSGGIPG). Composition is skewed to low complexity over residues 479 to 523 (VGTT…PRGT), 530 to 550 (VGPA…QPGA), and 568 to 581 (SAGP…PGPA). Over residues 582–591 (GSRGDGGPPG) the composition is skewed to gly residues. Residues 593–602 (TGFPGAAGRT) are compositionally biased toward low complexity. Gly residues predominate over residues 633–642 (GETGAGGPPG). The span at 649–689 (TAGPQGIIGAPGIIGIPGSRGIPGVSGSVGEPGPIGISGPP) shows a compositional bias: low complexity. Residues 693–702 (GPSGGVGNPG) are compositionally biased toward gly residues. 3 stretches are compositionally biased toward low complexity: residues 703–718 (VNGA…NPGN), 736–758 (YAGN…VGPA), and 766–781 (EPGP…AIGP).

The protein belongs to the fibrillar collagen family. Trimers of one alpha 2(I) and two alpha 1(I) chains. Interacts (via C-terminus) with TMEM131 (via PapD-L domain); the interaction is direct and is involved in assembly and TRAPPIII ER-to-Golgi transport complex-dependent secretion of collagen. Post-translationally, prolines at the third position of the tripeptide repeating unit (G-X-Y) are hydroxylated in some or all of the chains. In terms of tissue distribution, forms the fibrils of tendon, ligaments and bones. In bones, the fibrils are mineralized with calcium hydroxyapatite.

Its subcellular location is the secreted. The protein resides in the extracellular space. It is found in the extracellular matrix. In terms of biological role, type I collagen is a member of group I collagen (fibrillar forming collagen). In Cyclopes didactylus (Silky anteater), this protein is Collagen alpha-2(I) chain.